Consider the following 352-residue polypeptide: Holliday junction branch migration complex subunit RuvB (352 aa).

Residues Pro-4–Tyr-185 form a large ATPase domain (RuvB-L) region. Residues Ile-24, Arg-25, Gly-66, Lys-69, Thr-70, Thr-71, Glu-132 to Phe-134, Arg-175, Tyr-185, and Arg-222 contribute to the ATP site. Thr-70 contacts Mg(2+). Residues Asn-186 to Asp-256 are small ATPAse domain (RuvB-S). The tract at residues Glu-259–Asn-352 is head domain (RuvB-H). Positions 295, 314, and 319 each coordinate DNA.

The protein belongs to the RuvB family. As to quaternary structure, homohexamer. Forms an RuvA(8)-RuvB(12)-Holliday junction (HJ) complex. HJ DNA is sandwiched between 2 RuvA tetramers; dsDNA enters through RuvA and exits via RuvB. An RuvB hexamer assembles on each DNA strand where it exits the tetramer. Each RuvB hexamer is contacted by two RuvA subunits (via domain III) on 2 adjacent RuvB subunits; this complex drives branch migration. In the full resolvosome a probable DNA-RuvA(4)-RuvB(12)-RuvC(2) complex forms which resolves the HJ.

It is found in the cytoplasm. The catalysed reaction is ATP + H2O = ADP + phosphate + H(+). The RuvA-RuvB-RuvC complex processes Holliday junction (HJ) DNA during genetic recombination and DNA repair, while the RuvA-RuvB complex plays an important role in the rescue of blocked DNA replication forks via replication fork reversal (RFR). RuvA specifically binds to HJ cruciform DNA, conferring on it an open structure. The RuvB hexamer acts as an ATP-dependent pump, pulling dsDNA into and through the RuvAB complex. RuvB forms 2 homohexamers on either side of HJ DNA bound by 1 or 2 RuvA tetramers; 4 subunits per hexamer contact DNA at a time. Coordinated motions by a converter formed by DNA-disengaged RuvB subunits stimulates ATP hydrolysis and nucleotide exchange. Immobilization of the converter enables RuvB to convert the ATP-contained energy into a lever motion, pulling 2 nucleotides of DNA out of the RuvA tetramer per ATP hydrolyzed, thus driving DNA branch migration. The RuvB motors rotate together with the DNA substrate, which together with the progressing nucleotide cycle form the mechanistic basis for DNA recombination by continuous HJ branch migration. Branch migration allows RuvC to scan DNA until it finds its consensus sequence, where it cleaves and resolves cruciform DNA. In Pseudomonas aeruginosa (strain LESB58), this protein is Holliday junction branch migration complex subunit RuvB.